Here is a 397-residue protein sequence, read N- to C-terminus: Phosphopentomutase (397 aa).

6 residues coordinate Mn(2+): Asp-12, Asp-289, His-294, Asp-330, His-331, and His-342.

It belongs to the phosphopentomutase family. It depends on Mn(2+) as a cofactor.

The protein resides in the cytoplasm. It carries out the reaction 2-deoxy-alpha-D-ribose 1-phosphate = 2-deoxy-D-ribose 5-phosphate. The catalysed reaction is alpha-D-ribose 1-phosphate = D-ribose 5-phosphate. It participates in carbohydrate degradation; 2-deoxy-D-ribose 1-phosphate degradation; D-glyceraldehyde 3-phosphate and acetaldehyde from 2-deoxy-alpha-D-ribose 1-phosphate: step 1/2. Functionally, isomerase that catalyzes the conversion of deoxy-ribose 1-phosphate (dRib-1-P) and ribose 1-phosphate (Rib-1-P) to deoxy-ribose 5-phosphate (dRib-5-P) and ribose 5-phosphate (Rib-5-P), respectively. This Limosilactobacillus reuteri (strain DSM 20016) (Lactobacillus reuteri) protein is Phosphopentomutase.